The chain runs to 44 residues: Photosystem I reaction center subunit IX (44 aa).

The helical transmembrane segment at 9–29 (FVRSAPVVAAIWLSLTAGIII) threads the bilayer.

Belongs to the PsaJ family.

The protein resides in the cellular thylakoid membrane. Functionally, may help in the organization of the PsaE and PsaF subunits. In Prochlorococcus marinus (strain MIT 9301), this protein is Photosystem I reaction center subunit IX.